A 120-amino-acid polypeptide reads, in one-letter code: Ubiquitin domain-containing protein TINCR (120 aa).

The 70-residue stretch at 14-83 folds into the Ubiquitin-like domain; the sequence is YHIKVHLADE…LQDGSVLLLV (70 aa).

As to expression, detected in stratum corneum (at protein level).

The polypeptide is Ubiquitin domain-containing protein TINCR (Homo sapiens (Human)).